Reading from the N-terminus, the 348-residue chain is NADH-ubiquinone oxidoreductase chain 2 (348 aa).

11 consecutive transmembrane segments (helical) span residues P3–S23, H25–A45, F60–A80, M99–L119, L122–I142, N150–L170, I178–Y196, L200–L219, L246–I266, D274–L294, and L328–F348.

It belongs to the complex I subunit 2 family.

It localises to the mitochondrion inner membrane. The catalysed reaction is a ubiquinone + NADH + 5 H(+)(in) = a ubiquinol + NAD(+) + 4 H(+)(out). In terms of biological role, core subunit of the mitochondrial membrane respiratory chain NADH dehydrogenase (Complex I) that is believed to belong to the minimal assembly required for catalysis. Complex I functions in the transfer of electrons from NADH to the respiratory chain. The immediate electron acceptor for the enzyme is believed to be ubiquinone. The polypeptide is NADH-ubiquinone oxidoreductase chain 2 (MT-ND2) (Formosania lacustris (Oriental stream loach)).